The chain runs to 175 residues: 3-hydroxydecanoyl-[acyl-carrier-protein] dehydratase (175 aa).

The active site involves His-71.

The protein belongs to the thioester dehydratase family. FabA subfamily. As to quaternary structure, homodimer.

The protein localises to the cytoplasm. It catalyses the reaction a (3R)-hydroxyacyl-[ACP] = a (2E)-enoyl-[ACP] + H2O. It carries out the reaction (3R)-hydroxydecanoyl-[ACP] = (2E)-decenoyl-[ACP] + H2O. The catalysed reaction is (2E)-decenoyl-[ACP] = (3Z)-decenoyl-[ACP]. It participates in lipid metabolism; fatty acid biosynthesis. In terms of biological role, necessary for the introduction of cis unsaturation into fatty acids. Catalyzes the dehydration of (3R)-3-hydroxydecanoyl-ACP to E-(2)-decenoyl-ACP and then its isomerization to Z-(3)-decenoyl-ACP. Can catalyze the dehydratase reaction for beta-hydroxyacyl-ACPs with saturated chain lengths up to 16:0, being most active on intermediate chain length. The protein is 3-hydroxydecanoyl-[acyl-carrier-protein] dehydratase of Rhodopseudomonas palustris (strain ATCC BAA-98 / CGA009).